The following is a 2391-amino-acid chain: MTDLLRSVVTVIDVFYKYTKQDGECGTLSKGELKELLEKELHPVLKNPDDPDTVDVIMHMLDRDHDRRLDFTEFLLMIFKLTMACNKVLSKEYCKASGSKKHRRGHRHQEEESETEEDEEDTPGHKSGYRHSSWSEGEEHGYSSGHSRGTVKCRHGSNSRRLGRQGNLSSSGNQEGSQKRYHRSSCGHSWSGGKDRHGSSSVELRERINKSHISPSRESGEEYESGSGSNSWERKGHGGLSCGLETSGHESNSTQSRIREQKLGSSCSGSGDSGRRSHACGYSNSSGCGRPQNASSSCQSHRFGGQGNQFSYIQSGCQSGIKGGQGHGCVSGGQPSGCGQPESNPCSQSYSQRGYGARENGQPQNCGGQWRTGSSQSSCCGQYGSGGSQSCSNGQHEYGSCGRFSNSSSSNEFSKCDQYGSGSSQSTSFEQHGTGLSQSSGFEQHVCGSGQTCGQHESTSSQSLGYDQHGSSSGKTSGFGQHGSGSGQSSGFGQCGSGSGQSSGFGQHGSVSGQSSGFGQHGSVSGQSSGFGQHESRSRQSSYGQHGSGSSQSSGYGQYGSRETSGFGQHGLGSGQSTGFGQYGSGSGQSSGFGQHGSGSGQSSGFGQHESRSGQSSYGQHSSGSSQSSGYGQHGSRQTSGFGQHGSGSSQSTGFGQYGSGSGQSSGFGQHVSGSGQSSGFGQHESRSGHSSYGQHGFGSSQSSGYGQHGSSSGQTSGFGQHELSSGQSSSFGQHGSGSGQSSGFGQHGSGSGQSSGFGQHESRSGQSSYGQHSSGSSQSSGYGQHGSRQTSGFGQHGSGSSQSTGFGQYGSGSGQSAGFGQHGSGSGQSSGFGQHESRSHQSSYGQHGSGSSQSSGYGQHGSSSGQTSGFGQHRSSSGQYSGFGQHGSGSGQSSGFGQHGTGSGQYSGFGQHESRSHQSSYGQHGSGSSQSSGYGQHGSSSGQTFGFGQHRSGSGQSSGFGQHGSGSGQSSGFGQHESGSGKSSGFGQHESRSSQSNYGQHGSGSSQSSGYGQHGSSSGQTTGFGQHRSSSGQYSGFGQHGSGSDQSSGFGQHGTGSGQSSGFGQYESRSRQSSYGQHGSGSSQSSGYGQHGSNSGQTSGFGQHRPGSGQSSGFGQYGSGSGQSSGFGQHGSGTGKSSGFAQHEYRSGQSSYGQHGTGSSQSSGCGQHESGSGPTTSFGQHVSGSDNFSSSGQHISDSGQSTGFGQYGSGSGQSTGLGQGESQQVESGSTVHGRQETTHGQTINTTRHSQSGQGQSTQTGSRVTRRRRSSQSENSDSEVHSKVSHRHSEHIHTQAGSHYPKSGSTVRRRQGTTHGQRGDTTRHGHSGHGQSTQTGSRTSGRQRFSHSDATDSEVHSGVSHRPHSQEQTHSQAGSQHGESESTVHERHETTYGQTGEATGHGHSGHGQSTQRGSRTTGRRGSGHSESSDSEVHSGGSHRPQSQEQTHGQAGSQHGESGSTVHGRHGTTHGQTGDTTRHAHYHHGKSTQRGSSTTGRRGSGHSESSDSEVHSGGSHTHSGHTHGQSGSQHGESESIIHDRHRITHGQTGDTTRHSYSGHEQTTQTGSRTTGRQRTSHSESTDSEVHSGGSHRPHSREHTYGQAGSQHEEPEFTVHERHGTTHGQIGDTTGHSHSGHGQSTQRGSRTTGRQRSSHSESSDSEVHSGVSHTHTGHTHGQAGSQHGQSESIVPERHGTTHGQTGDTTRHAHYHHGLTTQTGSRTTGRRGSGHSEYSDSEGYSGVSHTHSGHTHGQARSQHGESESIVHERHGTIHGQTGDTTRHAHSGHGQSTQTGSRTTGRRSSGHSEYSDSEGHSGFSQRPHSRGHTHGQAGSQHGESESIVDERHGTTHGQTGDTSGHSQSGHGQSTQSGSSTTGRRRSGHSESSDSEVHSGGSHTHSGHTHSQARSQHGESESTVHKRHQTTHGQTGDTTEHGHPSHGQTIQTGSRTTGRRGSGHSEYSDSEGPSGVSHTHSGHTHGQAGSHYPESGSSVHERHGTTHGQTADTTRHGHSGHGQSTQRGSRTTGRRASGHSEYSDSEGHSGVSHTHSGHAHGQAGSQHGESGSSVHERHGTTHGQTGDTTRHAHSGHGQSTQRGSRTAGRRGSGHSESSDSEVHSGVSHTHSGHTYGQARSQHGESGSAIHGRQGTIHGQTGDTTRHGQSGHGQSTQTGSRTTGRQRSSHSESSDSEVHSEASPTHSGHTHSQAGSRHGQSGSSGHGRQGTTHGQTGDTTRHAHYGYGQSTQRGSRTTGRRGSGHSESSDSEVHSWGSHTHSGHIQGQAGSQQRQPGSTVHGRLETTHGQTGDTTRHGHSGYGQSTQTGSRSSRASHFQSHSSERQRHGSSQVWKHGSYGPAEYDYGHTGYGPSGGSRKSISNSHLSWSTDSTANKQLSRH.

Residues 1-81 (MTDLLRSVVT…TEFLLMIFKL (81 aa)) are S-100-like. EF-hand domains lie at 8 to 43 (VVTVIDVFYKYTKQDGECGTLSKGELKELLEKELHP) and 49 to 84 (DDPDTVDVIMHMLDRDHDRRLDFTEFLLMIFKLTMA). 5 residues coordinate Ca(2+): D62, D64, D66, R68, and E73. 3 disordered regions span residues 96-275 (ASGS…DSGR), 349-369 (SYSQRGYGARENGQPQNCGGQ), and 406-2391 (NSSS…LSRH). Positions 98–107 (GSKKHRRGHR) are enriched in basic residues. Residues 111 to 121 (EESETEEDEED) are compositionally biased toward acidic residues. Basic residues predominate over residues 149-163 (GTVKCRHGSNSRRLG). Polar residues predominate over residues 166 to 176 (GNLSSSGNQEG). Residues 193–209 (GKDRHGSSSVELRERIN) show a composition bias toward basic and acidic residues. A Filaggrin 1 repeat occupies 245–289 (ETSGHESNSTQSRIREQKLGSSCSGSGDSGRRSHACGYSNSSGCG). Composition is skewed to polar residues over residues 420–442 (GSGSSQSTSFEQHGTGLSQSSGF) and 449–476 (SGQTCGQHESTSSQSLGYDQHGSSSGKT). The Filaggrin 2 repeat unit spans residues 421 to 466 (SGSSQSTSFEQHGTGLSQSSGFEQHVCGSGQTCGQHESTSSQSLGY). Gly residues predominate over residues 480–507 (GQHGSGSGQSSGFGQCGSGSGQSSGFGQ). Positions 508 to 562 (HGSVSGQSSGFGQHGSVSGQSSGFGQHESRSRQSSYGQHGSGSSQSSGYGQYGSR) are enriched in low complexity. Residues 568–604 (GQHGLGSGQSTGFGQYGSGSGQSSGFGQHGSGSGQSS) are compositionally biased toward gly residues. A compositionally biased stretch (low complexity) spans 605–655 (GFGQHESRSGQSSYGQHSSGSSQSSGYGQHGSRQTSGFGQHGSGSSQSTGF). Positions 656–666 (GQYGSGSGQSS) are enriched in gly residues. A compositionally biased stretch (low complexity) spans 667–734 (GFGQHVSGSG…SSGQSSSFGQ (68 aa)). The span at 735-756 (HGSGSGQSSGFGQHGSGSGQSS) shows a compositional bias: gly residues. A compositionally biased stretch (low complexity) spans 757 to 807 (GFGQHESRSGQSSYGQHSSGSSQSSGYGQHGSRQTSGFGQHGSGSSQSTGF). Residues 808-831 (GQYGSGSGQSAGFGQHGSGSGQSS) are compositionally biased toward gly residues. Positions 832-884 (GFGQHESRSHQSSYGQHGSGSSQSSGYGQHGSSSGQTSGFGQHRSSSGQYSGF) are enriched in low complexity. Positions 885 to 908 (GQHGSGSGQSSGFGQHGTGSGQYS) are enriched in gly residues. A compositionally biased stretch (low complexity) spans 918–956 (HQSSYGQHGSGSSQSSGYGQHGSSSGQTFGFGQHRSGSG). A compositionally biased stretch (gly residues) spans 957–972 (QSSGFGQHGSGSGQSS). Composition is skewed to low complexity over residues 973–982 (GFGQHESGSG) and 994–1027 (SSQSNYGQHGSGSSQSSGYGQHGSSSGQTTGFGQ). A Filaggrin 3 repeat occupies 1019 to 1051 (SGQTTGFGQHRSSSGQYSGFGQHGSGSDQSSGF). A compositionally biased stretch (gly residues) spans 1052-1062 (GQHGTGSGQSS). Over residues 1063 to 1098 (GFGQYESRSRQSSYGQHGSGSSQSSGYGQHGSNSGQ) the composition is skewed to low complexity. A Filaggrin 4 repeat occupies 1097–1141 (GQTSGFGQHRPGSGQSSGFGQYGSGSGQSSGFGQHGSGTGKSSGF). Residues 1111-1137 (QSSGFGQYGSGSGQSSGFGQHGSGTGK) show a composition bias toward gly residues. Over residues 1148–1174 (SGQSSYGQHGTGSSQSSGCGQHESGSG) the composition is skewed to low complexity. Residues 1175–1198 (PTTSFGQHVSGSDNFSSSGQHISD) show a composition bias toward polar residues. Over residues 1206–1220 (GQYGSGSGQSTGLGQ) the composition is skewed to gly residues. Residues 1226-1249 (VESGSTVHGRQETTHGQTINTTRH) show a composition bias toward polar residues. Over residues 1250-1263 (SQSGQGQSTQTGSR) the composition is skewed to low complexity. A Phosphoserine modification is found at S1276. Over residues 1329–1343 (HGQSTQTGSRTSGRQ) the composition is skewed to polar residues. Over residues 1346–1355 (SHSDATDSEV) the composition is skewed to basic and acidic residues. The span at 1366-1377 (QEQTHSQAGSQH) shows a compositional bias: polar residues. The span at 1378–1390 (GESESTVHERHET) shows a compositional bias: basic and acidic residues. Over residues 1406–1416 (HGQSTQRGSRT) the composition is skewed to low complexity. A phosphoserine mark is found at S1427 and S1428. Positions 1439-1459 (RPQSQEQTHGQAGSQHGESGS) are enriched in polar residues. The Filaggrin 5 repeat unit spans residues 1455 to 1510 (GESGSTVHGRHGTTHGQTGDTTRHAHYHHGKSTQRGSSTTGRRGSGHSESSDSEVH). Residues 1487 to 1496 (TQRGSSTTGR) are compositionally biased toward low complexity. Phosphoserine is present on residues S1504 and S1505. Residues 1510–1529 (HSGGSHTHSGHTHGQSGSQH) show a composition bias toward low complexity. The span at 1544–1559 (HGQTGDTTRHSYSGHE) shows a compositional bias: polar residues. Residues 1560-1572 (QTTQTGSRTTGRQ) are compositionally biased toward low complexity. Composition is skewed to basic and acidic residues over residues 1575 to 1584 (SHSESTDSEV) and 1605 to 1618 (QHEEPEFTVHERHG). Position 1579 is a phosphoserine (S1579). The stretch at 1607-1662 (EEPEFTVHERHGTTHGQIGDTTGHSHSGHGQSTQRGSRTTGRQRSSHSESSDSEVH) is one Filaggrin 6 repeat. Positions 1627 to 1649 (TTGHSHSGHGQSTQRGSRTTGRQ) are enriched in low complexity. Basic and acidic residues predominate over residues 1652-1661 (SHSESSDSEV). Phosphoserine is present on residues S1656 and S1657. Composition is skewed to low complexity over residues 1662–1686 (HSGVSHTHTGHTHGQAGSQHGQSES) and 1711–1720 (GLTTQTGSRT). Residues 1755–1768 (QHGESESIVHERHG) show a composition bias toward basic and acidic residues. Residues 1757-1812 (GESESIVHERHGTIHGQTGDTTRHAHSGHGQSTQTGSRTTGRRSSGHSEYSDSEGH) form a Filaggrin 7 repeat. The segment covering 1784–1795 (GHGQSTQTGSRT) has biased composition (low complexity). 2 positions are modified to phosphoserine: S1800 and S1807. Over residues 1834–1845 (GESESIVDERHG) the composition is skewed to basic and acidic residues. Low complexity predominate over residues 1849–1873 (GQTGDTSGHSQSGHGQSTQSGSSTT). A compositionally biased stretch (basic and acidic residues) spans 1879-1888 (GHSESSDSEV). Residues S1883, S1884, and S1959 each carry the phosphoserine modification. Filaggrin repeat units follow at residues 1928–1964 (DTTEHGHPSHGQTIQTGSRTTGRRGSGHSEYSDSEGP) and 1984–2039 (PESG…SEGH). Low complexity-rich tracts occupy residues 1963-1982 (GPSGVSHTHSGHTHGQAGSH) and 2013-2022 (GQSTQRGSRT). Phosphoserine is present on S2034. 3 stretches are compositionally biased toward low complexity: residues 2039-2059 (HSGVSHTHSGHAHGQAGSQHG), 2114-2125 (HSGVSHTHSGHT), and 2162-2176 (HGQSTQTGSRTTGRQ). One copy of the Filaggrin 10 repeat lies at 2134 to 2189 (GESGSAIHGRQGTIHGQTGDTTRHGQSGHGQSTQTGSRTTGRQRSSHSESSDSEVH). The segment covering 2179 to 2190 (SHSESSDSEVHS) has biased composition (basic and acidic residues). Composition is skewed to low complexity over residues 2201 to 2211 (HSQAGSRHGQS), 2219 to 2228 (QGTTHGQTGD), and 2238 to 2247 (GQSTQRGSRT). The segment covering 2273 to 2288 (GHIQGQAGSQQRQPGS) has biased composition (polar residues). The segment covering 2320 to 2331 (SRSSRASHFQSH) has biased composition (low complexity). The segment covering 2367-2391 (SRKSISNSHLSWSTDSTANKQLSRH) has biased composition (polar residues).

It belongs to the S100-fused protein family. The protein in the N-terminal section; belongs to the S-100 family. Post-translationally, deiminated by PADI1, PADI2 or PADI3 in vitro. The deiminated form is degraded by calpain-1/CAPN1 more quickly and into shorter peptides than the intact protein. May be processed by calpain-1/CAPN1 in the uppermost epidermal layers. In terms of tissue distribution, expressed in skin, thymus, stomach and placenta, but not detected in heart, brain, liver, lung, bone marrow, small intestine, spleen, prostate, colon, adrenal gland, kidney, pancreas, mammary gland, bladder, thyroid, salivary gland and trachea. Weakly expressed in esophagus, tonsils and testis (at protein level). In the skin, strongly expressed in the upper stratum granulosum and lower stratum corneum, but not detected in the upper stratum corneum (at protein level). In scalp hair follicles, mainly restricted within the granular and cornified cells surrounding the infundibular outer root sheath, with weak expression in central and proximal outer root sheath (at protein level). Tends to be down-regulated in sporiatic lesions compared to non-lesional skin inthe same patients.

Its subcellular location is the cytoplasm. It localises to the cytoplasmic granule. Its function is as follows. Essential for normal cell-cell adhesion in the cornified cell layers. Important for proper integrity and mechanical strength of the stratum corneum of the epidermis. The sequence is that of Filaggrin-2 (FLG2) from Homo sapiens (Human).